The primary structure comprises 438 residues: UDP-N-acetylmuramoylalanine--D-glutamate ligase (438 aa).

112–118 provides a ligand contact to ATP; that stretch reads GSNGKST.

Belongs to the MurCDEF family.

It is found in the cytoplasm. It catalyses the reaction UDP-N-acetyl-alpha-D-muramoyl-L-alanine + D-glutamate + ATP = UDP-N-acetyl-alpha-D-muramoyl-L-alanyl-D-glutamate + ADP + phosphate + H(+). Its pathway is cell wall biogenesis; peptidoglycan biosynthesis. Functionally, cell wall formation. Catalyzes the addition of glutamate to the nucleotide precursor UDP-N-acetylmuramoyl-L-alanine (UMA). This is UDP-N-acetylmuramoylalanine--D-glutamate ligase from Pectobacterium atrosepticum (strain SCRI 1043 / ATCC BAA-672) (Erwinia carotovora subsp. atroseptica).